A 208-amino-acid polypeptide reads, in one-letter code: Dephospho-CoA kinase (208 aa).

Residues 11–207 (VIGLTGGIAS…EYYLELAQHD (197 aa)) enclose the DPCK domain. Position 19 to 24 (19 to 24 (ASGKSA)) interacts with ATP.

This sequence belongs to the CoaE family.

It localises to the cytoplasm. It catalyses the reaction 3'-dephospho-CoA + ATP = ADP + CoA + H(+). It functions in the pathway cofactor biosynthesis; coenzyme A biosynthesis; CoA from (R)-pantothenate: step 5/5. In terms of biological role, catalyzes the phosphorylation of the 3'-hydroxyl group of dephosphocoenzyme A to form coenzyme A. The protein is Dephospho-CoA kinase of Hahella chejuensis (strain KCTC 2396).